A 137-amino-acid polypeptide reads, in one-letter code: ATP synthase epsilon chain, chloroplastic (137 aa).

It belongs to the ATPase epsilon chain family. F-type ATPases have 2 components, CF(1) - the catalytic core - and CF(0) - the membrane proton channel. CF(1) has five subunits: alpha(3), beta(3), gamma(1), delta(1), epsilon(1). CF(0) has three main subunits: a, b and c.

The protein localises to the plastid. Its subcellular location is the chloroplast thylakoid membrane. Its function is as follows. Produces ATP from ADP in the presence of a proton gradient across the membrane. The protein is ATP synthase epsilon chain, chloroplastic of Hordeum vulgare (Barley).